The primary structure comprises 151 residues: MAPRKNKTVKEEVQVSLGPQVREGEIVFGVAHIYASFNDTFVHVTDLSGKETISRVTGGMKVKADRDEASPYAAMLAAQDVAEKCKSLGITALHIKLRATGGNRTKTPGPGAQSALRALARSSMKIGRIEDVTPIPSDSTRRKGGRRGRRL.

Positions 130–151 (EDVTPIPSDSTRRKGGRRGRRL) are disordered. Positions 142 to 151 (RKGGRRGRRL) are enriched in basic residues.

The protein belongs to the universal ribosomal protein uS11 family.

The chain is Small ribosomal subunit protein uS11 from Aedes aegypti (Yellowfever mosquito).